The primary structure comprises 149 residues: Deoxyuridine 5'-triphosphate nucleotidohydrolase (149 aa).

Residues 68–70 (RSG), N81, 85–87 (LID), and M95 each bind substrate.

The protein belongs to the dUTPase family. It depends on Mg(2+) as a cofactor.

It carries out the reaction dUTP + H2O = dUMP + diphosphate + H(+). The protein operates within pyrimidine metabolism; dUMP biosynthesis; dUMP from dCTP (dUTP route): step 2/2. In terms of biological role, this enzyme is involved in nucleotide metabolism: it produces dUMP, the immediate precursor of thymidine nucleotides and it decreases the intracellular concentration of dUTP so that uracil cannot be incorporated into DNA. The protein is Deoxyuridine 5'-triphosphate nucleotidohydrolase of Janthinobacterium sp. (strain Marseille) (Minibacterium massiliensis).